Reading from the N-terminus, the 325-residue chain is VSG expression site-associated protein 117A (325 aa).

The signal sequence occupies residues 1-23 (MKVTIVELVVWLFSVNFFVVVAE). Asn-72, Asn-290, and Asn-313 each carry an N-linked (GlcNAc...) asparagine glycan.

Its function is as follows. Not known but may be related to activation of the variant surface glycoprotein genes. This Trypanosoma brucei brucei protein is VSG expression site-associated protein 117A.